The primary structure comprises 266 residues: MATDRQYEDLLRLVLDTGTAKGDRTGTGTRSIFGHQLRYDLSAGFPLITTKKVHLKSIVYELLWFLRGDSNVGWLREHGVTIWDEWADPQGELGPVYGVQWRSWPTPDGTHIDQISQVLQTLRTDPDSRRMIVSAWNVAELDRMALAPCHAFFQFYVADGKLSCQLYQRSADLFLGVPFNIASYALLTHMVAQQTELEPGEFIWTGGDCHIYDNHVEQVTEQLGREPYPFPRLELRPAPSLFDYRFEDVTVTDYRHHPAIKAPVAV.

R24 contacts dUMP. H54 contacts (6R)-5,10-methylene-5,6,7,8-tetrahydrofolate. Residue 129-130 (RR) participates in dUMP binding. Residue C149 is the Nucleophile of the active site. Residues 169–172 (RSAD), N180, and 210–212 (HIY) each bind dUMP. Residue D172 participates in (6R)-5,10-methylene-5,6,7,8-tetrahydrofolate binding. (6R)-5,10-methylene-5,6,7,8-tetrahydrofolate is bound at residue A265.

The protein belongs to the thymidylate synthase family. Bacterial-type ThyA subfamily. In terms of assembly, homodimer.

Its subcellular location is the cytoplasm. It carries out the reaction dUMP + (6R)-5,10-methylene-5,6,7,8-tetrahydrofolate = 7,8-dihydrofolate + dTMP. Its pathway is pyrimidine metabolism; dTTP biosynthesis. Catalyzes the reductive methylation of 2'-deoxyuridine-5'-monophosphate (dUMP) to 2'-deoxythymidine-5'-monophosphate (dTMP) while utilizing 5,10-methylenetetrahydrofolate (mTHF) as the methyl donor and reductant in the reaction, yielding dihydrofolate (DHF) as a by-product. This enzymatic reaction provides an intracellular de novo source of dTMP, an essential precursor for DNA biosynthesis. This chain is Thymidylate synthase, found in Nocardia farcinica (strain IFM 10152).